The chain runs to 441 residues: Probable cyclic di-GMP phosphodiesterase VC_1348 (441 aa).

The 116-residue stretch at 72 to 187 (TILIVDDSPD…LLKSRVHTHL (116 aa)) folds into the Response regulatory domain. Aspartate 120 carries the post-translational modification 4-aspartylphosphate. Positions 214 to 425 (LDRMQDAVVF…FIDIAQKFAD (212 aa)) constitute an HD-GYP domain.

The enzyme catalyses 3',3'-c-di-GMP + 2 H2O = 2 GMP + 2 H(+). In terms of biological role, probable phosphodiesterase (PDE) that catalyzes the hydrolysis of cyclic diguanylate (c-di-GMP). Increases motility and decreases biofilm formation in vivo. The chain is Probable cyclic di-GMP phosphodiesterase VC_1348 from Vibrio cholerae serotype O1 (strain ATCC 39315 / El Tor Inaba N16961).